Here is a 195-residue protein sequence, read N- to C-terminus: Antigenic thaumatin-like protein ARB_01183 (195 aa).

A signal peptide spans 1-22 (MHSNTAVIALSALAALVPAALA). Intrachain disulfides connect cysteine 125–cysteine 153 and cysteine 130–cysteine 137. A disordered region spans residues 171-195 (GPKKMFKPVQEKAANRPRHPHARPE). Residues 185 to 195 (NRPRHPHARPE) show a composition bias toward basic residues.

Belongs to the thaumatin family.

Its subcellular location is the secreted. In terms of biological role, might be involved in the inhibition of growth of fungal competitors and pathogenicity. The protein is Antigenic thaumatin-like protein ARB_01183 of Arthroderma benhamiae (strain ATCC MYA-4681 / CBS 112371) (Trichophyton mentagrophytes).